A 177-amino-acid chain; its full sequence is Inner membrane-spanning protein YciB (177 aa).

The next 5 helical transmembrane spans lie at 22–42, 50–70, 76–96, 121–141, and 151–171; these read IFIA…LYWI, INLF…IFHN, WKIT…QFFM, FFWA…ALCL, and VFGL…YINF.

It belongs to the YciB family.

It is found in the cell inner membrane. Its function is as follows. Plays a role in cell envelope biogenesis, maintenance of cell envelope integrity and membrane homeostasis. This chain is Inner membrane-spanning protein YciB, found in Buchnera aphidicola subsp. Schizaphis graminum (strain Sg).